The sequence spans 154 residues: 8-oxo-dGTP diphosphatase (154 aa).

The region spanning 1-129 (MPQLATICYI…DHTFVEWLLE (129 aa)) is the Nudix hydrolase domain. Residues G38, E53, E56, and E57 each contribute to the Mg(2+) site. Positions 38–59 (GKLERGETPQECAVREILEETG) match the Nudix box motif.

It belongs to the Nudix hydrolase family. In terms of assembly, homotrimer. It depends on Mg(2+) as a cofactor.

The enzyme catalyses 8-oxo-dGTP + H2O = 8-oxo-dGMP + diphosphate + H(+). Functionally, involved in the DNA repair system to avoid A.T to G.C transversions. Degrades 8-oxo-dGTP to the monophosphate, but is also active on all of the nucleoside triphosphates. The chain is 8-oxo-dGTP diphosphatase (mutX) from Streptococcus pneumoniae (strain ATCC BAA-255 / R6).